We begin with the raw amino-acid sequence, 410 residues long: Homeobox protein Hox-A3a (410 aa).

Residues Val79–His126 form a disordered region. Residues Ile127–Lys132 carry the Antp-type hexapeptide motif. A DNA-binding region (homeobox) is located at residues Ser163–Gln222. Residues Gln222–Gly249 are disordered.

It belongs to the Antp homeobox family.

It is found in the nucleus. Sequence-specific transcription factor which is part of a developmental regulatory system that provides cells with specific positional identities on the anterior-posterior axis. The protein is Homeobox protein Hox-A3a (hoxa3a) of Danio rerio (Zebrafish).